A 164-amino-acid chain; its full sequence is MKSVITTTISAADAAGRYPSTSDLQSVQGNIQRAAARLEAAEKLGSNHEAVVKEAGDACFSKYGYLKNPGEAGENQEKINKCYRDIDHYMRLINYTLVVGGTGPLDEWGIAGAREVYRTLNLPSAAYIAAFVFTRDRLCIPRDMSAQAGVEFCTALDYLINSLS.

Residues Cys82 and Cys139 each contribute to the (2R,3E)-phycoerythrobilin site.

This sequence belongs to the phycobiliprotein family. In terms of assembly, heterodimer of an alpha and a beta chain. In terms of processing, contains two covalently linked bilin chromophores.

It localises to the plastid. Its subcellular location is the chloroplast thylakoid membrane. Light-harvesting photosynthetic bile pigment-protein from the phycobiliprotein complex. This is R-phycoerythrin alpha chain (cpeA) from Lophosiphonia boldii (Red alga).